A 232-amino-acid polypeptide reads, in one-letter code: Ribonuclease 3 (232 aa).

Residues 6–137 enclose the RNase III domain; the sequence is QEMLKRDFNI…FIGALYLDQG (132 aa). Glu50 contributes to the Mg(2+) binding site. Asp54 is a catalytic residue. Mg(2+)-binding residues include Asp123 and Glu126. Glu126 is a catalytic residue. One can recognise a DRBM domain in the interval 163–232; sequence DNKTELQEVL…AYQALKKLRK (70 aa).

Belongs to the ribonuclease III family. In terms of assembly, homodimer. It depends on Mg(2+) as a cofactor.

It localises to the cytoplasm. The enzyme catalyses Endonucleolytic cleavage to 5'-phosphomonoester.. Its function is as follows. Digests double-stranded RNA. Involved in the processing of primary rRNA transcript to yield the immediate precursors to the large and small rRNAs (23S and 16S). Processes some mRNAs, and tRNAs when they are encoded in the rRNA operon. Processes pre-crRNA and tracrRNA of type II CRISPR loci if present in the organism. The sequence is that of Ribonuclease 3 from Ligilactobacillus salivarius (strain UCC118) (Lactobacillus salivarius).